The primary structure comprises 376 residues: Queuine tRNA-ribosyltransferase (376 aa).

The Proton acceptor role is filled by aspartate 93. Residues 93–97 (DSGGF), aspartate 147, glutamine 190, and glycine 217 each bind substrate. The RNA binding stretch occupies residues 248–254 (GVGKPDD). The Nucleophile role is filled by aspartate 267. The Zn(2+) site is built by cysteine 305, cysteine 307, cysteine 310, and histidine 336.

The protein belongs to the queuine tRNA-ribosyltransferase family. As to quaternary structure, homodimer. Within each dimer, one monomer is responsible for RNA recognition and catalysis, while the other monomer binds to the replacement base PreQ1. The cofactor is Zn(2+).

The catalysed reaction is 7-aminomethyl-7-carbaguanine + guanosine(34) in tRNA = 7-aminomethyl-7-carbaguanosine(34) in tRNA + guanine. It functions in the pathway tRNA modification; tRNA-queuosine biosynthesis. Catalyzes the base-exchange of a guanine (G) residue with the queuine precursor 7-aminomethyl-7-deazaguanine (PreQ1) at position 34 (anticodon wobble position) in tRNAs with GU(N) anticodons (tRNA-Asp, -Asn, -His and -Tyr). Catalysis occurs through a double-displacement mechanism. The nucleophile active site attacks the C1' of nucleotide 34 to detach the guanine base from the RNA, forming a covalent enzyme-RNA intermediate. The proton acceptor active site deprotonates the incoming PreQ1, allowing a nucleophilic attack on the C1' of the ribose to form the product. After dissociation, two additional enzymatic reactions on the tRNA convert PreQ1 to queuine (Q), resulting in the hypermodified nucleoside queuosine (7-(((4,5-cis-dihydroxy-2-cyclopenten-1-yl)amino)methyl)-7-deazaguanosine). The sequence is that of Queuine tRNA-ribosyltransferase from Ruegeria pomeroyi (strain ATCC 700808 / DSM 15171 / DSS-3) (Silicibacter pomeroyi).